The chain runs to 382 residues: Dual-specificity RNA methyltransferase RlmN (382 aa).

The Proton acceptor role is filled by glutamate 95. A Radical SAM core domain is found at 101–348 (EDDRGTLCIS…TTVRKTRGDD (248 aa)). An intrachain disulfide couples cysteine 108 to cysteine 353. Positions 115, 119, and 122 each coordinate [4Fe-4S] cluster. S-adenosyl-L-methionine-binding positions include 179-180 (GE), serine 211, 233-235 (SLH), and asparagine 310. Cysteine 353 acts as the S-methylcysteine intermediate in catalysis.

The protein belongs to the radical SAM superfamily. RlmN family. The cofactor is [4Fe-4S] cluster.

The protein localises to the cytoplasm. The catalysed reaction is adenosine(2503) in 23S rRNA + 2 reduced [2Fe-2S]-[ferredoxin] + 2 S-adenosyl-L-methionine = 2-methyladenosine(2503) in 23S rRNA + 5'-deoxyadenosine + L-methionine + 2 oxidized [2Fe-2S]-[ferredoxin] + S-adenosyl-L-homocysteine. It carries out the reaction adenosine(37) in tRNA + 2 reduced [2Fe-2S]-[ferredoxin] + 2 S-adenosyl-L-methionine = 2-methyladenosine(37) in tRNA + 5'-deoxyadenosine + L-methionine + 2 oxidized [2Fe-2S]-[ferredoxin] + S-adenosyl-L-homocysteine. Its function is as follows. Specifically methylates position 2 of adenine 2503 in 23S rRNA and position 2 of adenine 37 in tRNAs. m2A2503 modification seems to play a crucial role in the proofreading step occurring at the peptidyl transferase center and thus would serve to optimize ribosomal fidelity. The polypeptide is Dual-specificity RNA methyltransferase RlmN (Bordetella parapertussis (strain 12822 / ATCC BAA-587 / NCTC 13253)).